Consider the following 420-residue polypeptide: G2/mitotic-specific cyclin-A (420 aa).

Residues Val64–Asp93 form a disordered region. The span at Gln83–Asp93 shows a compositional bias: polar residues.

It belongs to the cyclin family. Cyclin AB subfamily.

Essential for the control of the cell cycle at the G2/M (mitosis) transition. Interacts with the CDC2 and CDK2 protein kinases to form MPF. G2/M cyclins accumulate steadily during G2 and are abruptly destroyed at mitosis. The polypeptide is G2/mitotic-specific cyclin-A (Hydra viridissima (Green hydra)).